Reading from the N-terminus, the 225-residue chain is NAD(P)H-quinone oxidoreductase subunit K, chloroplastic (225 aa).

Residues cysteine 43, cysteine 44, cysteine 108, and cysteine 139 each coordinate [4Fe-4S] cluster.

The protein belongs to the complex I 20 kDa subunit family. In terms of assembly, NDH is composed of at least 16 different subunits, 5 of which are encoded in the nucleus. [4Fe-4S] cluster is required as a cofactor.

It is found in the plastid. It localises to the chloroplast thylakoid membrane. It carries out the reaction a plastoquinone + NADH + (n+1) H(+)(in) = a plastoquinol + NAD(+) + n H(+)(out). The enzyme catalyses a plastoquinone + NADPH + (n+1) H(+)(in) = a plastoquinol + NADP(+) + n H(+)(out). In terms of biological role, NDH shuttles electrons from NAD(P)H:plastoquinone, via FMN and iron-sulfur (Fe-S) centers, to quinones in the photosynthetic chain and possibly in a chloroplast respiratory chain. The immediate electron acceptor for the enzyme in this species is believed to be plastoquinone. Couples the redox reaction to proton translocation, and thus conserves the redox energy in a proton gradient. This is NAD(P)H-quinone oxidoreductase subunit K, chloroplastic from Manihot esculenta (Cassava).